A 159-amino-acid polypeptide reads, in one-letter code: ATP synthase subunit b (159 aa).

Residues 8–28 form a helical membrane-spanning segment; sequence ILATIINFIILILILKHFFWD.

Belongs to the ATPase B chain family. F-type ATPases have 2 components, F(1) - the catalytic core - and F(0) - the membrane proton channel. F(1) has five subunits: alpha(3), beta(3), gamma(1), delta(1), epsilon(1). F(0) has three main subunits: a(1), b(2) and c(10-14). The alpha and beta chains form an alternating ring which encloses part of the gamma chain. F(1) is attached to F(0) by a central stalk formed by the gamma and epsilon chains, while a peripheral stalk is formed by the delta and b chains.

It is found in the cell membrane. In terms of biological role, f(1)F(0) ATP synthase produces ATP from ADP in the presence of a proton or sodium gradient. F-type ATPases consist of two structural domains, F(1) containing the extramembraneous catalytic core and F(0) containing the membrane proton channel, linked together by a central stalk and a peripheral stalk. During catalysis, ATP synthesis in the catalytic domain of F(1) is coupled via a rotary mechanism of the central stalk subunits to proton translocation. Its function is as follows. Component of the F(0) channel, it forms part of the peripheral stalk, linking F(1) to F(0). The protein is ATP synthase subunit b of Clostridium perfringens (strain ATCC 13124 / DSM 756 / JCM 1290 / NCIMB 6125 / NCTC 8237 / Type A).